Reading from the N-terminus, the 319-residue chain is Acetyl-coenzyme A carboxylase carboxyl transferase subunit alpha (319 aa).

The CoA carboxyltransferase C-terminal domain maps to 35–296 (NIDEEVHRLR…KAQLLADLAD (262 aa)).

It belongs to the AccA family. Acetyl-CoA carboxylase is a heterohexamer composed of biotin carboxyl carrier protein (AccB), biotin carboxylase (AccC) and two subunits each of ACCase subunit alpha (AccA) and ACCase subunit beta (AccD).

Its subcellular location is the cytoplasm. The catalysed reaction is N(6)-carboxybiotinyl-L-lysyl-[protein] + acetyl-CoA = N(6)-biotinyl-L-lysyl-[protein] + malonyl-CoA. It participates in lipid metabolism; malonyl-CoA biosynthesis; malonyl-CoA from acetyl-CoA: step 1/1. Its function is as follows. Component of the acetyl coenzyme A carboxylase (ACC) complex. First, biotin carboxylase catalyzes the carboxylation of biotin on its carrier protein (BCCP) and then the CO(2) group is transferred by the carboxyltransferase to acetyl-CoA to form malonyl-CoA. In Shigella boydii serotype 4 (strain Sb227), this protein is Acetyl-coenzyme A carboxylase carboxyl transferase subunit alpha.